A 302-amino-acid chain; its full sequence is Homoserine O-acetyltransferase (302 aa).

The active-site Acyl-thioester intermediate is the cysteine 142. Substrate contacts are provided by lysine 163 and serine 192. Histidine 235 functions as the Proton acceptor in the catalytic mechanism. The active site involves glutamate 237. Residue arginine 249 participates in substrate binding.

The protein belongs to the MetA family.

Its subcellular location is the cytoplasm. It carries out the reaction L-homoserine + acetyl-CoA = O-acetyl-L-homoserine + CoA. Its pathway is amino-acid biosynthesis; L-methionine biosynthesis via de novo pathway; O-acetyl-L-homoserine from L-homoserine: step 1/1. Transfers an acetyl group from acetyl-CoA to L-homoserine, forming acetyl-L-homoserine. The protein is Homoserine O-acetyltransferase of Geobacillus kaustophilus (strain HTA426).